An 819-amino-acid polypeptide reads, in one-letter code: DNA topoisomerase 4 subunit A (819 aa).

The 467-residue stretch at 30-496 folds into the Topo IIA-type catalytic domain; it reads LPDIRDGLKP…QIIEIDTASL (467 aa). The active-site O-(5'-phospho-DNA)-tyrosine intermediate is the Tyr-118.

The protein belongs to the type II topoisomerase GyrA/ParC subunit family. ParC type 2 subfamily. Heterotetramer composed of ParC and ParE.

The protein localises to the cell membrane. The catalysed reaction is ATP-dependent breakage, passage and rejoining of double-stranded DNA.. Topoisomerase IV is essential for chromosome segregation. It relaxes supercoiled DNA. Performs the decatenation events required during the replication of a circular DNA molecule. This is DNA topoisomerase 4 subunit A from Streptococcus pyogenes serotype M18 (strain MGAS8232).